A 563-amino-acid chain; its full sequence is Benzaldehyde lyase (563 aa).

It belongs to the TPP enzyme family. Requires a metal cation as cofactor. Thiamine diphosphate serves as cofactor.

The enzyme catalyses benzoin = 2 benzaldehyde. Cleavage of benzoin-anisoin acyloin linkage. The sequence is that of Benzaldehyde lyase (bznB) from Pseudomonas fluorescens.